The chain runs to 160 residues: Globin CTT-II beta (160 aa).

The first 15 residues, 1 to 15 (MKFLVLALCIAAAVA), serve as a signal peptide directing secretion. The Globin domain maps to 17–160 (PLSADEASLV…NVFNMMFSYL (144 aa)). 2 residues coordinate heme b: His-75 and His-110.

It belongs to the globin family. As to quaternary structure, homodimer.

The sequence is that of Globin CTT-II beta from Chironomus thummi thummi (Midge).